The primary structure comprises 159 residues: Nucleotide-binding protein PSPA7_4966 (159 aa).

The protein belongs to the YajQ family.

Nucleotide-binding protein. The protein is Nucleotide-binding protein PSPA7_4966 of Pseudomonas paraeruginosa (strain DSM 24068 / PA7) (Pseudomonas aeruginosa (strain PA7)).